Consider the following 219-residue polypeptide: tRNA (guanine-N(7)-)-methyltransferase (219 aa).

4 residues coordinate S-adenosyl-L-methionine: Glu43, Asp68, Glu101, and Asn124. Residues Lys128 and Asp160 each contribute to the substrate site.

Belongs to the class I-like SAM-binding methyltransferase superfamily. TrmB family.

It carries out the reaction guanosine(46) in tRNA + S-adenosyl-L-methionine = N(7)-methylguanosine(46) in tRNA + S-adenosyl-L-homocysteine. It functions in the pathway tRNA modification; N(7)-methylguanine-tRNA biosynthesis. In terms of biological role, catalyzes the formation of N(7)-methylguanine at position 46 (m7G46) in tRNA. The polypeptide is tRNA (guanine-N(7)-)-methyltransferase (Clostridium botulinum (strain Alaska E43 / Type E3)).